Consider the following 194-residue polypeptide: Dephospho-CoA kinase (194 aa).

The region spanning threonine 3–leucine 194 is the DPCK domain. Residue glycine 11–threonine 16 participates in ATP binding.

Belongs to the CoaE family.

The protein localises to the cytoplasm. It catalyses the reaction 3'-dephospho-CoA + ATP = ADP + CoA + H(+). The protein operates within cofactor biosynthesis; coenzyme A biosynthesis; CoA from (R)-pantothenate: step 5/5. In terms of biological role, catalyzes the phosphorylation of the 3'-hydroxyl group of dephosphocoenzyme A to form coenzyme A. In Corynebacterium jeikeium (strain K411), this protein is Dephospho-CoA kinase.